We begin with the raw amino-acid sequence, 368 residues long: tRNA(Met) cytidine acetate ligase (368 aa).

Residues 7–20, Gly96, Asn152, and Arg175 each bind ATP; that span reads IAEF…HKYL.

The protein belongs to the TmcAL family.

Its subcellular location is the cytoplasm. The enzyme catalyses cytidine(34) in elongator tRNA(Met) + acetate + ATP = N(4)-acetylcytidine(34) in elongator tRNA(Met) + AMP + diphosphate. In terms of biological role, catalyzes the formation of N(4)-acetylcytidine (ac(4)C) at the wobble position of elongator tRNA(Met), using acetate and ATP as substrates. First activates an acetate ion to form acetyladenylate (Ac-AMP) and then transfers the acetyl group to tRNA to form ac(4)C34. The sequence is that of tRNA(Met) cytidine acetate ligase from Streptococcus pyogenes serotype M1.